The chain runs to 425 residues: 3-isopropylmalate dehydratase large subunit (425 aa).

[4Fe-4S] cluster-binding residues include C305, C365, and C368.

The protein belongs to the aconitase/IPM isomerase family. LeuC type 2 subfamily. As to quaternary structure, heterodimer of LeuC and LeuD. Requires [4Fe-4S] cluster as cofactor.

It catalyses the reaction (2R,3S)-3-isopropylmalate = (2S)-2-isopropylmalate. The protein operates within amino-acid biosynthesis; L-leucine biosynthesis; L-leucine from 3-methyl-2-oxobutanoate: step 2/4. In terms of biological role, catalyzes the isomerization between 2-isopropylmalate and 3-isopropylmalate, via the formation of 2-isopropylmaleate. The polypeptide is 3-isopropylmalate dehydratase large subunit (Clostridioides difficile (strain 630) (Peptoclostridium difficile)).